Reading from the N-terminus, the 249-residue chain is 2,3-bisphosphoglycerate-dependent phosphoglycerate mutase (249 aa).

Residues Arg9–Asn16, Thr22–Gly23, Arg61, Glu88–Tyr91, Lys99, Arg115–Arg116, and Gly184–Asn185 contribute to the substrate site. The Tele-phosphohistidine intermediate role is filled by His10. Residue Glu88 is the Proton donor/acceptor of the active site.

It belongs to the phosphoglycerate mutase family. BPG-dependent PGAM subfamily. In terms of assembly, homodimer.

The enzyme catalyses (2R)-2-phosphoglycerate = (2R)-3-phosphoglycerate. Its pathway is carbohydrate degradation; glycolysis; pyruvate from D-glyceraldehyde 3-phosphate: step 3/5. Catalyzes the interconversion of 2-phosphoglycerate and 3-phosphoglycerate. In Xanthomonas euvesicatoria pv. vesicatoria (strain 85-10) (Xanthomonas campestris pv. vesicatoria), this protein is 2,3-bisphosphoglycerate-dependent phosphoglycerate mutase.